Here is a 162-residue protein sequence, read N- to C-terminus: MSSSQVVRDSAKKLVNLLEKYPKDRIHHLVSFRDVQIARFRRVAGLPNVDDKGKSIKEKKPSLDEIKSIINRTSGPLGLNKEMLTKIQNKMVDEKFTEESINEQIRALSTIMNNKFRNYYDIGDKLYKPAGNPQYYQRLINAVDGKKKESLFTAMRTVLFGK.

Ser2 carries the N-acetylserine modification. Thr97 is subject to Phosphothreonine.

It localises to the mitochondrion. Functionally, this protein is involved in processing of the 5' terminus and the intervening sequences of cytochrome b pre-mRNA. The polypeptide is Cytochrome B pre-mRNA-processing protein 6 (CBP6) (Saccharomyces cerevisiae (strain ATCC 204508 / S288c) (Baker's yeast)).